Here is a 345-residue protein sequence, read N- to C-terminus: Biotin synthase (345 aa).

One can recognise a Radical SAM core domain in the interval 38 to 256; the sequence is QQVQVSTLLS…IAVARIMMPS (219 aa). Residues Cys53, Cys57, and Cys60 each contribute to the [4Fe-4S] cluster site. [2Fe-2S] cluster is bound by residues Cys97, Cys128, Cys188, and Arg260.

This sequence belongs to the radical SAM superfamily. Biotin synthase family. As to quaternary structure, homodimer. The cofactor is [4Fe-4S] cluster. Requires [2Fe-2S] cluster as cofactor.

It carries out the reaction (4R,5S)-dethiobiotin + (sulfur carrier)-SH + 2 reduced [2Fe-2S]-[ferredoxin] + 2 S-adenosyl-L-methionine = (sulfur carrier)-H + biotin + 2 5'-deoxyadenosine + 2 L-methionine + 2 oxidized [2Fe-2S]-[ferredoxin]. Its pathway is cofactor biosynthesis; biotin biosynthesis; biotin from 7,8-diaminononanoate: step 2/2. Its function is as follows. Catalyzes the conversion of dethiobiotin (DTB) to biotin by the insertion of a sulfur atom into dethiobiotin via a radical-based mechanism. This is Biotin synthase from Photorhabdus laumondii subsp. laumondii (strain DSM 15139 / CIP 105565 / TT01) (Photorhabdus luminescens subsp. laumondii).